Consider the following 360-residue polypeptide: Outer membrane protein P2 (360 aa).

The signal sequence occupies residues 1–20 (MKKTLAALIVGAFAASAANA).

This sequence belongs to the Gram-negative porin family. Homotrimer.

It is found in the cell outer membrane. Forms pores that allow passive diffusion of small molecules across the outer membrane. This Haemophilus influenzae protein is Outer membrane protein P2 (ompP2).